A 147-amino-acid chain; its full sequence is Fluoride-specific ion channel FluC 1 (147 aa).

Helical transmembrane passes span tyrosine 29–leucine 49, isoleucine 61–phenylalanine 81, alanine 90–isoleucine 110, and phenylalanine 118–valine 138. The Na(+) site is built by glycine 97 and threonine 100.

This sequence belongs to the fluoride channel Fluc/FEX (TC 1.A.43) family.

Its subcellular location is the cell membrane. It catalyses the reaction fluoride(in) = fluoride(out). With respect to regulation, na(+) is not transported, but it plays an essential structural role and its presence is essential for fluoride channel function. In terms of biological role, fluoride-specific ion channel. Important for reducing fluoride concentration in the cell, thus reducing its toxicity. The sequence is that of Fluoride-specific ion channel FluC 1 from Staphylococcus aureus (strain Mu50 / ATCC 700699).